We begin with the raw amino-acid sequence, 284 residues long: Acetylglutamate kinase (284 aa).

Residues 66-67, arginine 88, and asparagine 179 each bind substrate; that span reads GG.

This sequence belongs to the acetylglutamate kinase family. ArgB subfamily.

It localises to the cytoplasm. The enzyme catalyses N-acetyl-L-glutamate + ATP = N-acetyl-L-glutamyl 5-phosphate + ADP. Its pathway is amino-acid biosynthesis; L-arginine biosynthesis; N(2)-acetyl-L-ornithine from L-glutamate: step 2/4. Functionally, catalyzes the ATP-dependent phosphorylation of N-acetyl-L-glutamate. The polypeptide is Acetylglutamate kinase (Actinobacillus pleuropneumoniae serotype 7 (strain AP76)).